A 436-amino-acid polypeptide reads, in one-letter code: Ribulose bisphosphate carboxylase large chain (436 aa).

Residues Asn-104 and Thr-154 each coordinate substrate. The Proton acceptor role is filled by Lys-156. Position 158 (Lys-158) interacts with substrate. Residues Lys-182, Asp-184, and Glu-185 each contribute to the Mg(2+) site. Lys-182 carries the N6-carboxylysine modification. The Proton acceptor role is filled by His-275. Arg-276, His-308, and Ser-360 together coordinate substrate.

It belongs to the RuBisCO large chain family. Type I subfamily. As to quaternary structure, heterohexadecamer of 8 large chains and 8 small chains; disulfide-linked. The disulfide link is formed within the large subunit homodimers. Mg(2+) is required as a cofactor. The disulfide bond which can form in the large chain dimeric partners within the hexadecamer appears to be associated with oxidative stress and protein turnover.

It localises to the plastid. The protein localises to the chloroplast. The enzyme catalyses 2 (2R)-3-phosphoglycerate + 2 H(+) = D-ribulose 1,5-bisphosphate + CO2 + H2O. It catalyses the reaction D-ribulose 1,5-bisphosphate + O2 = 2-phosphoglycolate + (2R)-3-phosphoglycerate + 2 H(+). RuBisCO catalyzes two reactions: the carboxylation of D-ribulose 1,5-bisphosphate, the primary event in carbon dioxide fixation, as well as the oxidative fragmentation of the pentose substrate in the photorespiration process. Both reactions occur simultaneously and in competition at the same active site. This Euglena geniculata protein is Ribulose bisphosphate carboxylase large chain.